Reading from the N-terminus, the 958-residue chain is Coiled-coil domain-containing protein 33 (958 aa).

A C2 domain is found at 214 to 353 (SPEEPLIASQ…LVKPTESGKA (140 aa)). Residues 602 to 617 (SKDTVSSTMDLSTSTP) show a composition bias toward polar residues. The interval 602–628 (SKDTVSSTMDLSTSTPREAEEEPLVPE) is disordered. Coiled-coil stretches lie at residues 632 to 774 (DTEM…LEDR) and 859 to 899 (FNLL…RLQE). A disordered region spans residues 899-958 (EQEKGFRHPSNSIIIEQPSALTHSMDLKQPSELEPLLPSSDSKLNKPLSPQKETANSQQT). Composition is skewed to polar residues over residues 907–920 (PSNSIIIEQPSALT) and 949–958 (QKETANSQQT).

The polypeptide is Coiled-coil domain-containing protein 33 (CCDC33) (Homo sapiens (Human)).